A 535-amino-acid chain; its full sequence is Glutamate--cysteine ligase (535 aa).

It belongs to the glutamate--cysteine ligase type 1 family. Type 1 subfamily.

It catalyses the reaction L-cysteine + L-glutamate + ATP = gamma-L-glutamyl-L-cysteine + ADP + phosphate + H(+). It functions in the pathway sulfur metabolism; glutathione biosynthesis; glutathione from L-cysteine and L-glutamate: step 1/2. This chain is Glutamate--cysteine ligase, found in Pseudomonas savastanoi pv. phaseolicola (strain 1448A / Race 6) (Pseudomonas syringae pv. phaseolicola (strain 1448A / Race 6)).